Here is a 597-residue protein sequence, read N- to C-terminus: Aspartate--tRNA(Asp/Asn) ligase (597 aa).

E175 serves as a coordination point for L-aspartate. An aspartate region spans residues 199–202 (QLFK). R221 serves as a coordination point for L-aspartate. Residues 221-223 (RDE) and Q230 contribute to the ATP site. Residue H453 coordinates L-aspartate. Residue E487 participates in ATP binding. R494 provides a ligand contact to L-aspartate. 539-542 (GWDR) is a binding site for ATP. The disordered stretch occupies residues 562-597 (SGGGVDPLTDAPAPITPEQRKESGIDAKPKKKETKN). A compositionally biased stretch (basic and acidic residues) spans 579 to 589 (EQRKESGIDAK).

It belongs to the class-II aminoacyl-tRNA synthetase family. Type 1 subfamily. In terms of assembly, homodimer.

Its subcellular location is the cytoplasm. The enzyme catalyses tRNA(Asx) + L-aspartate + ATP = L-aspartyl-tRNA(Asx) + AMP + diphosphate. Aspartyl-tRNA synthetase with relaxed tRNA specificity since it is able to aspartylate not only its cognate tRNA(Asp) but also tRNA(Asn). Reaction proceeds in two steps: L-aspartate is first activated by ATP to form Asp-AMP and then transferred to the acceptor end of tRNA(Asp/Asn). The protein is Aspartate--tRNA(Asp/Asn) ligase of Corynebacterium kroppenstedtii (strain DSM 44385 / JCM 11950 / CIP 105744 / CCUG 35717).